We begin with the raw amino-acid sequence, 487 residues long: Glycogen synthase 2 (487 aa).

Lysine 12 is a binding site for ADP-alpha-D-glucose.

It belongs to the glycosyltransferase 1 family. Bacterial/plant glycogen synthase subfamily.

It catalyses the reaction [(1-&gt;4)-alpha-D-glucosyl](n) + ADP-alpha-D-glucose = [(1-&gt;4)-alpha-D-glucosyl](n+1) + ADP + H(+). The protein operates within glycan biosynthesis; glycogen biosynthesis. Synthesizes alpha-1,4-glucan chains using ADP-glucose. The sequence is that of Glycogen synthase 2 from Methylococcus capsulatus (strain ATCC 33009 / NCIMB 11132 / Bath).